We begin with the raw amino-acid sequence, 320 residues long: Ribosomal RNA small subunit methyltransferase H (320 aa).

S-adenosyl-L-methionine-binding positions include 36–38, Asp-56, Phe-82, Asp-103, and Gln-110; that span reads GGH.

The protein belongs to the methyltransferase superfamily. RsmH family.

The protein localises to the cytoplasm. It carries out the reaction cytidine(1402) in 16S rRNA + S-adenosyl-L-methionine = N(4)-methylcytidine(1402) in 16S rRNA + S-adenosyl-L-homocysteine + H(+). In terms of biological role, specifically methylates the N4 position of cytidine in position 1402 (C1402) of 16S rRNA. In Chromobacterium violaceum (strain ATCC 12472 / DSM 30191 / JCM 1249 / CCUG 213 / NBRC 12614 / NCIMB 9131 / NCTC 9757 / MK), this protein is Ribosomal RNA small subunit methyltransferase H.